The following is a 101-amino-acid chain: Small ribosomal subunit protein uS14 (101 aa).

This sequence belongs to the universal ribosomal protein uS14 family. In terms of assembly, part of the 30S ribosomal subunit. Contacts proteins S3 and S10.

Functionally, binds 16S rRNA, required for the assembly of 30S particles and may also be responsible for determining the conformation of the 16S rRNA at the A site. The chain is Small ribosomal subunit protein uS14 from Methylibium petroleiphilum (strain ATCC BAA-1232 / LMG 22953 / PM1).